The primary structure comprises 513 residues: MVSPLIILLIIWLSVGAKSVEIASINHPCAYAHTVNITDGLRMKDGSYSYAGVVVPPHLMAEYSFKVIDGVEYRAKKHLRGCVCLLKPCISFCCPENLVFDAKHWNCTMPHQVRESTHVELTYANRTVDQVRIRDRFVVRTELGCRNKFVDKKHDNFWQWDLFENGTLRRDNRLWSTDEYCFSPLEHNPEQWELTPLNCERFQTGYRVWIYAICSIIAIIINIFILSLLGSVRDARKSHYGQLIIYYLLSMIVGYSLLVYLALKNPMKLSHVACRNIGFLAYFCIMLSFVFLAICSLDFLLKFKQKAVRSSVRRLSLALAVLAVIGLRFLVSLAQDSKLPKHFKPGMGEDYCWFDVRTWGILIYYYGPIALLLIFSIVCCLKAYFSIYELPPDTQYILGTQLKIVKTHFYAFSAYIVGVFAVWIREIVVYIMARVREHFFIIDFWSGICILGLAIAGFILLLGKNLHVKSWWAINVESSQTDLSIINARVYKFDEKGDLKSSDSPYKPTVTSL.

The first 19 residues, 1 to 19 (MVSPLIILLIIWLSVGAKS), serve as a signal peptide directing secretion. Residues 20-207 (VEIASINHPC…NCERFQTGYR (188 aa)) lie on the Extracellular side of the membrane. Intrachain disulfides connect C29-C82, C84-C89, C93-C181, and C94-C107. An N-linked (GlcNAc...) asparagine glycan is attached at N36. 3 N-linked (GlcNAc...) asparagine glycosylation sites follow: N106, N125, and N165. A helical membrane pass occupies residues 208–228 (VWIYAICSIIAIIINIFILSL). Residues 229 to 242 (LGSVRDARKSHYGQ) lie on the Cytoplasmic side of the membrane. Residues 243-263 (LIIYYLLSMIVGYSLLVYLAL) form a helical membrane-spanning segment. The Extracellular portion of the chain corresponds to 264-276 (KNPMKLSHVACRN). Residues 277–297 (IGFLAYFCIMLSFVFLAICSL) traverse the membrane as a helical segment. Over 298 to 314 (DFLLKFKQKAVRSSVRR) the chain is Cytoplasmic. A helical membrane pass occupies residues 315 to 335 (LSLALAVLAVIGLRFLVSLAQ). Topologically, residues 336 to 360 (DSKLPKHFKPGMGEDYCWFDVRTWG) are extracellular. A helical membrane pass occupies residues 361-381 (ILIYYYGPIALLLIFSIVCCL). The Cytoplasmic portion of the chain corresponds to 382–403 (KAYFSIYELPPDTQYILGTQLK). A helical transmembrane segment spans residues 404–424 (IVKTHFYAFSAYIVGVFAVWI). The Extracellular segment spans residues 425–438 (REIVVYIMARVREH). Residues 439 to 459 (FFIIDFWSGICILGLAIAGFI) form a helical membrane-spanning segment. The Cytoplasmic portion of the chain corresponds to 460-513 (LLLGKNLHVKSWWAINVESSQTDLSIINARVYKFDEKGDLKSSDSPYKPTVTSL).

It belongs to the G-protein coupled receptor 2 family. Mth subfamily.

Its subcellular location is the cell membrane. In Drosophila melanogaster (Fruit fly), this protein is Probable G-protein coupled receptor Mth-like 9 (mthl9).